A 406-amino-acid polypeptide reads, in one-letter code: Propionate kinase (406 aa).

Residues Asn11 and Lys18 each contribute to the ATP site. Asn11 provides a ligand contact to Mg(2+). Substrate is bound at residue Arg86. Asp143 serves as the catalytic Proton donor/acceptor. Residues His175, 203 to 207, 278 to 280, and 326 to 330 each bind ATP; these read HLGNG, DMR, and GIGEN.

This sequence belongs to the acetokinase family. TdcD subfamily. As to quaternary structure, homodimer. The cofactor is Mg(2+).

It carries out the reaction propanoate + ATP = propanoyl phosphate + ADP. It participates in amino-acid degradation; L-threonine degradation via propanoate pathway; propanoate from L-threonine: step 4/4. Catalyzes the conversion of propionyl phosphate and ADP to propionate and ATP. This chain is Propionate kinase, found in Yersinia enterocolitica serotype O:8 / biotype 1B (strain NCTC 13174 / 8081).